The chain runs to 573 residues: uncharacterized protein (573 aa).

The 284-residue stretch at 15-298 (AGIALILMLT…FPFLIMIFTR (284 aa)) folds into the ABC transmembrane type-1 domain. The next 6 helical transmembrane spans lie at 17–37 (IALI…LLIA), 52–72 (VWIW…AGML), 127–147 (IFMS…GIVL), 153–173 (VKLG…LLWV), 238–258 (FTMP…LWAG), and 275–295 (IINY…LIMI). The ABC transporter domain maps to 330–563 (IEFQHVSFRY…SQLYKRIYES (234 aa)). An ATP-binding site is contributed by 364–371 (GATGSGKS).

Belongs to the ABC transporter superfamily.

It localises to the cell membrane. This is an uncharacterized protein from Bacillus subtilis (strain 168).